We begin with the raw amino-acid sequence, 151 residues long: 3-dehydroquinate dehydratase (151 aa).

The Proton acceptor role is filled by Tyr-26. The substrate site is built by Asn-75, His-81, and Asp-88. Catalysis depends on His-101, which acts as the Proton donor. Substrate contacts are provided by residues 102–103 (LS) and Arg-112.

This sequence belongs to the type-II 3-dehydroquinase family. As to quaternary structure, homododecamer.

The enzyme catalyses 3-dehydroquinate = 3-dehydroshikimate + H2O. Its pathway is metabolic intermediate biosynthesis; chorismate biosynthesis; chorismate from D-erythrose 4-phosphate and phosphoenolpyruvate: step 3/7. Catalyzes a trans-dehydration via an enolate intermediate. This chain is 3-dehydroquinate dehydratase, found in Shewanella sediminis (strain HAW-EB3).